We begin with the raw amino-acid sequence, 240 residues long: uncharacterized protein (240 aa).

Positions 2–223 constitute an ABC transporter domain; that stretch reads VRIQDLSLAF…GNAPRELHQA (222 aa). Residue 34–41 participates in ATP binding; that stretch reads GSSGVGKS.

It belongs to the ABC transporter superfamily.

This is an uncharacterized protein from Haemophilus influenzae (strain ATCC 51907 / DSM 11121 / KW20 / Rd).